Here is an 89-residue protein sequence, read N- to C-terminus: MSRSLKKGPYINVKLEKKVLAMNESGKKVVVKTWSRASMISPDFVGHTVAVHNGNKFIPVYVTENMVGHKLGEFAPTRTFRGHAGNKKK.

This sequence belongs to the universal ribosomal protein uS19 family.

In terms of biological role, protein S19 forms a complex with S13 that binds strongly to the 16S ribosomal RNA. The sequence is that of Small ribosomal subunit protein uS19 from Bacteroides fragilis (strain YCH46).